The primary structure comprises 287 residues: Small ribosomal subunit protein uS3 (287 aa).

Positions 38 to 106 constitute a KH type-2 domain; that stretch reads IRRLLATGLE…QVQLNILEVK (69 aa). Positions 216-287 are disordered; the sequence is AAAPAGADRP…AETTTQNPGS (72 aa). The segment covering 238–287 has biased composition (low complexity); that stretch reads SGASGTTATSTDAGRAASGTQEAPAAAEAAAGTEAAAGAAAETTTQNPGS.

The protein belongs to the universal ribosomal protein uS3 family. In terms of assembly, part of the 30S ribosomal subunit. Forms a tight complex with proteins S10 and S14.

In terms of biological role, binds the lower part of the 30S subunit head. Binds mRNA in the 70S ribosome, positioning it for translation. The sequence is that of Small ribosomal subunit protein uS3 from Mycobacterium sp. (strain JLS).